Consider the following 503-residue polypeptide: Probable apyrase 4 (503 aa).

Low complexity predominate over residues 1–14 (MQRSNARSRSNINS). The tract at residues 1–39 (MQRSNARSRSNINSDMVDPPEVQTSPGNHRSSPSTAAKP) is disordered. Over 1 to 45 (MQRSNARSRSNINSDMVDPPEVQTSPGNHRSSPSTAAKPKSKRTK) the chain is Cytoplasmic. Residues 46–66 (SIIFVIVACVTIALGLLFIGY) form a helical; Signal-anchor for type II membrane protein membrane-spanning segment. At 67–503 (SILRSGRNRR…DLSNVAKYKI (437 aa)) the chain is on the extracellular side. Residue 83–93 (VIIDGGSSGTR) participates in ATP binding. Glu206 serves as the catalytic Proton acceptor. 230 to 240 (GIVELGGASAQ) serves as a coordination point for ATP. Residues Asn261, Asn293, and Asn338 are each glycosylated (N-linked (GlcNAc...) asparagine).

This sequence belongs to the GDA1/CD39 NTPase family. Ca(2+) is required as a cofactor. Expressed both in the primary root and lateral root but not in the rosette leaves.

The protein resides in the membrane. It catalyses the reaction a ribonucleoside 5'-triphosphate + 2 H2O = a ribonucleoside 5'-phosphate + 2 phosphate + 2 H(+). Functionally, catalyzes the hydrolysis of phosphoanhydride bonds of nucleoside tri- and di-phosphates. The protein is Probable apyrase 4 (APY4) of Arabidopsis thaliana (Mouse-ear cress).